Here is a 235-residue protein sequence, read N- to C-terminus: Large ribosomal subunit protein uL3 (235 aa).

The interval A150 to E189 is disordered.

The protein belongs to the universal ribosomal protein uL3 family. In terms of assembly, part of the 50S ribosomal subunit. Forms a cluster with proteins L14 and L19.

In terms of biological role, one of the primary rRNA binding proteins, it binds directly near the 3'-end of the 23S rRNA, where it nucleates assembly of the 50S subunit. The polypeptide is Large ribosomal subunit protein uL3 (Protochlamydia amoebophila (strain UWE25)).